Here is a 367-residue protein sequence, read N- to C-terminus: Chorismate synthase (367 aa).

Positions 48 and 54 each coordinate NADP(+). Residues R125–S127, N238–A239, G278, K293–S297, and R319 each bind FMN.

The protein belongs to the chorismate synthase family. As to quaternary structure, homotetramer. The cofactor is FMNH2.

The enzyme catalyses 5-O-(1-carboxyvinyl)-3-phosphoshikimate = chorismate + phosphate. It participates in metabolic intermediate biosynthesis; chorismate biosynthesis; chorismate from D-erythrose 4-phosphate and phosphoenolpyruvate: step 7/7. Its function is as follows. Catalyzes the anti-1,4-elimination of the C-3 phosphate and the C-6 proR hydrogen from 5-enolpyruvylshikimate-3-phosphate (EPSP) to yield chorismate, which is the branch point compound that serves as the starting substrate for the three terminal pathways of aromatic amino acid biosynthesis. This reaction introduces a second double bond into the aromatic ring system. The sequence is that of Chorismate synthase from Stenotrophomonas maltophilia (strain K279a).